The sequence spans 433 residues: Alpha-(1-&gt;3)-arabinofuranosyltransferase (433 aa).

Helical transmembrane passes span 118 to 138, 140 to 160, 164 to 184, 197 to 217, 224 to 244, 280 to 300, 310 to 330, 333 to 353, 356 to 376, and 385 to 405; these read LFISINTAAILVAAYLLLRMF, FTLTSVAAPALILAMFATETV, LVFTNINGCILLLEVLFLRWL, LAIGLTLVLKPLLGPLLLLPL, ALVAAVVVPVVVNVAALPLVS, WLILFLRILFTAITFGALWLL, LFWFTTSSGVLLLWSWLVMSL, GYYSMMLFPFLMTVVLPNSVI, WPAWLGVYGFMTLDRWLLFNW, and YLKITYGWSLLLIVTFTVLYF.

It belongs to the glycosyltransferase 87 family.

The protein resides in the cell membrane. It carries out the reaction Adds an alpha-D-arabinofuranosyl group from trans,octacis-decaprenylphospho-beta-D-arabinofuranose at the 3-O-position of an alpha-(1-&gt;5)-arabinofuranan chain attached to a beta-(1-&gt;5)-galactofuranan chain.. The protein operates within cell wall biogenesis; cell wall polysaccharide biosynthesis. Its function is as follows. Involved in the biosynthesis of the arabinogalactan (AG) region of the mycolylarabinogalactan-peptidoglycan (mAGP) complex, an essential component of the mycobacterial cell wall. Catalyzes the addition of an arabinofuranosyl (Araf) residue from the sugar donor beta-D-arabinofuranosyl-1-monophosphoryldecaprenol (DPA) on the C-3 of an alpha-(1-&gt;5)-linked Araf from the arabinan backbone of AG. The chain is Alpha-(1-&gt;3)-arabinofuranosyltransferase (aftC) from Mycobacterium tuberculosis (strain CDC 1551 / Oshkosh).